Here is a 406-residue protein sequence, read N- to C-terminus: Putative colanic acid biosynthesis glycosyltransferase WcaL (406 aa).

It belongs to the glycosyltransferase group 1 family. Glycosyltransferase 4 subfamily.

It participates in slime biogenesis; slime polysaccharide biosynthesis. The chain is Putative colanic acid biosynthesis glycosyltransferase WcaL (wcaL) from Salmonella typhimurium (strain LT2 / SGSC1412 / ATCC 700720).